We begin with the raw amino-acid sequence, 160 residues long: UPF0262 protein Mrad2831_3513 (160 aa).

Belongs to the UPF0262 family.

This is UPF0262 protein Mrad2831_3513 from Methylobacterium radiotolerans (strain ATCC 27329 / DSM 1819 / JCM 2831 / NBRC 15690 / NCIMB 10815 / 0-1).